A 215-amino-acid polypeptide reads, in one-letter code: Large ribosomal subunit protein uL4 (215 aa).

The disordered stretch occupies residues 43–100; it reads AAKRQGTHSTKTRGEVSGGGKKPYRQKGSGRARQGSTRAPQFTGGGTVHGPKPRDYSQ.

This sequence belongs to the universal ribosomal protein uL4 family. In terms of assembly, part of the 50S ribosomal subunit.

Functionally, one of the primary rRNA binding proteins, this protein initially binds near the 5'-end of the 23S rRNA. It is important during the early stages of 50S assembly. It makes multiple contacts with different domains of the 23S rRNA in the assembled 50S subunit and ribosome. In terms of biological role, forms part of the polypeptide exit tunnel. In Mycolicibacterium smegmatis (Mycobacterium smegmatis), this protein is Large ribosomal subunit protein uL4.